Here is a 500-residue protein sequence, read N- to C-terminus: TBC1 domain family member 10A (500 aa).

Residues 1-10 are compositionally biased toward basic and acidic residues; that stretch reads MAKSSRENGP. The disordered stretch occupies residues 1 to 45; it reads MAKSSRENGPREPAAGGSLSGTRESLAQGPDAATADELSSLGSDS. Residues Ser-39, Ser-40, and Ser-45 each carry the phosphoserine modification. Positions 111–299 constitute a Rab-GAP TBC domain; the sequence is GIPPSLRGRA…RVWDMFFCEG (189 aa). Disordered regions lie at residues 396–415 and 420–500; these read AEPG…LPPD and SSKA…DTYL. A Phosphoserine modification is found at Ser-407. Over residues 438-453 the composition is skewed to polar residues; that stretch reads TSAQLDKSPGLSQATV. The residue at position 477 (Thr-477) is a Phosphothreonine. Residues 497 to 500 are binding to the PDZ domain of EBP50; it reads DTYL.

In terms of assembly, binds to the first PDZ domain of NHERF1 and NHERF2. As to expression, expressed in most tissues, except for skeletal muscle.

The protein resides in the cell projection. It localises to the microvillus. Its function is as follows. GTPase-activating protein (GAP) specific for RAB27A and RAB35. Does not show GAP activity for RAB2A, RAB3A and RAB4A. This chain is TBC1 domain family member 10A (Tbc1d10a), found in Mus musculus (Mouse).